The primary structure comprises 156 residues: MKEKRDLKIQAIENGTVIDHIKAGQALNVLRILGISSAFRATISFVMNAPGAAGIKDVVKIEGKELSVEELNRIALISPKATINIIRDFKVVQKNKVVLPSYVEGVVRCINPNCISNSSEPIKSKFSVLQSEEEGVTLNCLYCEHVISENIAENLL.

Residues C109, C114, C140, and C143 each contribute to the Zn(2+) site.

The protein belongs to the PyrI family. As to quaternary structure, contains catalytic and regulatory chains. It depends on Zn(2+) as a cofactor.

Involved in allosteric regulation of aspartate carbamoyltransferase. This is Aspartate carbamoyltransferase regulatory chain from Methanosarcina barkeri (strain Fusaro / DSM 804).